Consider the following 364-residue polypeptide: D-alanine--D-alanine ligase A (364 aa).

The 204-residue stretch at 145–348 (KRLLRDAGLN…YTDLITRLIE (204 aa)) folds into the ATP-grasp domain. ATP is bound at residue 175 to 230 (ESKLGLPLFVKPANQGSSVGVSKVTSEEQYAIAVDLAFEFDHKVIVEQGIKGREIE). Residues Asp302, Glu315, and Asn317 each contribute to the Mg(2+) site.

It belongs to the D-alanine--D-alanine ligase family. Mg(2+) is required as a cofactor. Requires Mn(2+) as cofactor.

Its subcellular location is the cytoplasm. It catalyses the reaction 2 D-alanine + ATP = D-alanyl-D-alanine + ADP + phosphate + H(+). The protein operates within cell wall biogenesis; peptidoglycan biosynthesis. Its function is as follows. Cell wall formation. The sequence is that of D-alanine--D-alanine ligase A (ddlA) from Escherichia coli O157:H7.